A 907-amino-acid polypeptide reads, in one-letter code: Collagen alpha-2(I) chain (907 aa).

Disordered stretches follow at residues 1–183 (GPMG…GIPG) and 199–907 (IPGP…PGPS). Positions 19–33 (AGEDGHPGKPGRERG) are enriched in basic and acidic residues. Low complexity-rich tracts occupy residues 101 to 130 (VGAP…SAGP), 155 to 169 (AGPR…VSGP), and 206 to 221 (PGPV…RGIV). N260 is modified (deamidated asparagine). P272 is subject to 4-hydroxyproline. Low complexity-rich tracts occupy residues 272-281 (PGIRGSRGIP), 292-307 (PPGS…VRGP), 340-362 (PAGI…RGEP), 424-441 (PGES…SRGP), 453-475 (EPGV…PGER), 495-507 (APGA…PAGA), 535-555 (VGPA…QPGA), and 566-581 (NGPV…AGPA). Residues 591–600 (GSRGDGGPPG) are compositionally biased toward gly residues. Low complexity-rich tracts occupy residues 601-611 (ATGFPGAAGRT), 664-691 (EAGT…IPGS), 706-745 (EPGP…NPGN), 756-766 (NSGPVGAAGAP), and 783-804 (EPGP…PSGP). Over residues 808 to 819 (RGDKGEPGDKGP) the composition is skewed to basic and acidic residues. The segment covering 892–907 (AGPPGPPGPPGPPGPS) has biased composition (pro residues).

This sequence belongs to the fibrillar collagen family. Trimers of one alpha 2(I) and two alpha 1(I) chains. Interacts (via C-terminus) with TMEM131 (via PapD-L domain); the interaction is direct and is involved in assembly and TRAPPIII ER-to-Golgi transport complex-dependent secretion of collagen. In terms of processing, prolines at the third position of the tripeptide repeating unit (G-X-Y) are hydroxylated in some or all of the chains. As to expression, forms the fibrils of tendon, ligaments and bones. In bones, the fibrils are mineralized with calcium hydroxyapatite.

The protein resides in the secreted. Its subcellular location is the extracellular space. The protein localises to the extracellular matrix. Functionally, type I collagen is a member of group I collagen (fibrillar forming collagen). The chain is Collagen alpha-2(I) chain from Macrauchenia sp.